Reading from the N-terminus, the 107-residue chain is Ig kappa chain V-VI region NQ2-48.2.2 (107 aa).

The framework-1 stretch occupies residues 1–23; the sequence is QILLTQSPAIMSASPGQKVTMTC. Cysteine 23 and cysteine 87 form a disulfide bridge. A complementarity-determining-1 region spans residues 24–33; that stretch reads SASSSVSYMH. The segment at 34–48 is framework-2; it reads WYQQKSGTSPKRWIY. Positions 49–55 are complementarity-determining-2; it reads DTSKLAS. Residues 56–87 are framework-3; that stretch reads GVPARFSGSGSATSYSLTITSMQAEDAATYYC. Residues 88–96 form a complementarity-determining-3 region; that stretch reads QQWSSNPLT. The segment at 97 to 106 is framework-4; that stretch reads FGAGTKLXLK.

In terms of biological role, anti-2-phenyl oxazolone (PHOX) Antibody. The sequence is that of Ig kappa chain V-VI region NQ2-48.2.2 from Mus musculus (Mouse).